Here is a 401-residue protein sequence, read N- to C-terminus: (1R,4R,5S)-(-)-guaia-6,10(14)-diene synthase (401 aa).

2 residues coordinate Mg(2+): Asp-134 and Glu-139. The short motif at 134 to 138 (DDQFD) is the DDXXD motif element. Residue Arg-242 coordinates substrate. The Mg(2+) site is built by Asn-288 and Ser-292. Substrate is bound at residue Lys-295. A Mg(2+)-binding site is contributed by Asp-296. 375 to 376 (RY) lines the substrate pocket.

It belongs to the terpene synthase family. Requires Mg(2+) as cofactor.

The enzyme catalyses (2E,6E)-farnesyl diphosphate = (1R,4R,5S)-(-)-guaia-6,10(14)-diene + diphosphate. Its pathway is secondary metabolite biosynthesis; terpenoid biosynthesis. In terms of biological role, catalyzes the conversion of (2E,6E)-farnesyl diphosphate (FPP) to yield the bicyclic sesquiterpene guaia-6,10(14)-diene via a 1,10-cyclization, which requires the abstraction of the pyrophosphate from FPP to yield the (E,E)-germacradienyl cation. The only accepted substrate is farnesyl diphosphate (FPP). This is (1R,4R,5S)-(-)-guaia-6,10(14)-diene synthase from Fusarium mangiferae (Mango malformation disease fungus).